Reading from the N-terminus, the 76-residue chain is Beta-defensin 121 (76 aa).

An N-terminal signal peptide occupies residues 1–15; that stretch reads MKLLLLLLTVTLLLA. Disulfide bonds link Cys23–Cys50, Cys30–Cys44, and Cys34–Cys51.

Belongs to the beta-defensin family.

It localises to the secreted. Has antibacterial activity. This is Beta-defensin 121 (DEFB121) from Pan troglodytes (Chimpanzee).